A 338-amino-acid polypeptide reads, in one-letter code: D-erythrose-4-phosphate dehydrogenase (338 aa).

11-12 (RI) lines the NAD(+) pocket. Substrate-binding positions include 153 to 155 (SCT), Arg-199, 212 to 213 (TK), and Arg-235. The active-site Nucleophile is the Cys-154. Position 317 (Asn-317) interacts with NAD(+).

Belongs to the glyceraldehyde-3-phosphate dehydrogenase family. Epd subfamily. In terms of assembly, homotetramer.

It localises to the cytoplasm. It carries out the reaction D-erythrose 4-phosphate + NAD(+) + H2O = 4-phospho-D-erythronate + NADH + 2 H(+). It participates in cofactor biosynthesis; pyridoxine 5'-phosphate biosynthesis; pyridoxine 5'-phosphate from D-erythrose 4-phosphate: step 1/5. In terms of biological role, catalyzes the NAD-dependent conversion of D-erythrose 4-phosphate to 4-phosphoerythronate. The chain is D-erythrose-4-phosphate dehydrogenase from Shewanella loihica (strain ATCC BAA-1088 / PV-4).